The chain runs to 203 residues: GTP cyclohydrolase 1 (203 aa).

Zn(2+) contacts are provided by Cys87, His90, and Cys158.

Belongs to the GTP cyclohydrolase I family. In terms of assembly, homomer.

The catalysed reaction is GTP + H2O = 7,8-dihydroneopterin 3'-triphosphate + formate + H(+). Its pathway is cofactor biosynthesis; 7,8-dihydroneopterin triphosphate biosynthesis; 7,8-dihydroneopterin triphosphate from GTP: step 1/1. This chain is GTP cyclohydrolase 1, found in Xylella fastidiosa (strain M23).